We begin with the raw amino-acid sequence, 133 residues long: ATP synthase epsilon chain, chloroplastic (133 aa).

This sequence belongs to the ATPase epsilon chain family. F-type ATPases have 2 components, CF(1) - the catalytic core - and CF(0) - the membrane proton channel. CF(1) has five subunits: alpha(3), beta(3), gamma(1), delta(1), epsilon(1). CF(0) has three main subunits: a, b and c.

The protein resides in the plastid. It localises to the chloroplast thylakoid membrane. Functionally, produces ATP from ADP in the presence of a proton gradient across the membrane. The polypeptide is ATP synthase epsilon chain, chloroplastic (Piper cenocladum (Ant piper)).